An 861-amino-acid polypeptide reads, in one-letter code: Leucine--tRNA ligase (861 aa).

The 'HIGH' region signature appears at 42-52 (PYPSGNLHMGH). Residues 620-624 (KMSKS) carry the 'KMSKS' region motif. Lys623 contacts ATP.

Belongs to the class-I aminoacyl-tRNA synthetase family.

It is found in the cytoplasm. The catalysed reaction is tRNA(Leu) + L-leucine + ATP = L-leucyl-tRNA(Leu) + AMP + diphosphate. This Baumannia cicadellinicola subsp. Homalodisca coagulata protein is Leucine--tRNA ligase.